The sequence spans 179 residues: Laminin-binding fimbrial subunit ElfA (179 aa).

An N-terminal signal peptide occupies residues 1–21 (MKKSVLTAFITVVCATSSVMA).

Belongs to the fimbrial protein family.

Its subcellular location is the fimbrium. Functionally, part of the elfADCG fimbrial operon, which could be required for adherence to host epithelial cells. ElfA is an accessory colonization factor that contributes to adherence of bacteria to human intestinal epithelial cells and to animal intestinal tissue in vitro. Binds specifically to laminin, but not to fibronectin or collagen type IV. This is Laminin-binding fimbrial subunit ElfA (elfA) from Escherichia coli O157:H7.